We begin with the raw amino-acid sequence, 104 residues long: UPF0213 protein YsiG (104 aa).

The 78-residue stretch at 2–79 (NQYFTYILQC…KLVRKQKLSL (78 aa)) folds into the GIY-YIG domain.

Belongs to the UPF0213 family.

This Lactococcus lactis subsp. lactis (strain IL1403) (Streptococcus lactis) protein is UPF0213 protein YsiG (ysiG).